Reading from the N-terminus, the 97-residue chain is uncharacterized protein (97 aa).

The tract at residues Ile27–Asp50 is disordered.

This is an uncharacterized protein from Caldicellulosiruptor saccharolyticus (Caldocellum saccharolyticum).